The primary structure comprises 185 residues: Elongation factor P (185 aa).

The protein belongs to the elongation factor P family.

It is found in the cytoplasm. It functions in the pathway protein biosynthesis; polypeptide chain elongation. In terms of biological role, involved in peptide bond synthesis. Stimulates efficient translation and peptide-bond synthesis on native or reconstituted 70S ribosomes in vitro. Probably functions indirectly by altering the affinity of the ribosome for aminoacyl-tRNA, thus increasing their reactivity as acceptors for peptidyl transferase. In Tropheryma whipplei (strain TW08/27) (Whipple's bacillus), this protein is Elongation factor P.